The primary structure comprises 95 residues: Aspartyl/glutamyl-tRNA(Asn/Gln) amidotransferase subunit C (95 aa).

Belongs to the GatC family. As to quaternary structure, heterotrimer of A, B and C subunits.

The enzyme catalyses L-glutamyl-tRNA(Gln) + L-glutamine + ATP + H2O = L-glutaminyl-tRNA(Gln) + L-glutamate + ADP + phosphate + H(+). It catalyses the reaction L-aspartyl-tRNA(Asn) + L-glutamine + ATP + H2O = L-asparaginyl-tRNA(Asn) + L-glutamate + ADP + phosphate + 2 H(+). In terms of biological role, allows the formation of correctly charged Asn-tRNA(Asn) or Gln-tRNA(Gln) through the transamidation of misacylated Asp-tRNA(Asn) or Glu-tRNA(Gln) in organisms which lack either or both of asparaginyl-tRNA or glutaminyl-tRNA synthetases. The reaction takes place in the presence of glutamine and ATP through an activated phospho-Asp-tRNA(Asn) or phospho-Glu-tRNA(Gln). The sequence is that of Aspartyl/glutamyl-tRNA(Asn/Gln) amidotransferase subunit C from Chlorobium phaeovibrioides (strain DSM 265 / 1930) (Prosthecochloris vibrioformis (strain DSM 265)).